A 62-amino-acid chain; its full sequence is Photosystem II reaction center protein Z (62 aa).

2 consecutive transmembrane segments (helical) span residues 8 to 28 (TLFALILFSFVLVVGVPVVFA) and 41 to 61 (LSGLGLWILLVFVVGILNSFV).

This sequence belongs to the PsbZ family. PSII is composed of 1 copy each of membrane proteins PsbA, PsbB, PsbC, PsbD, PsbE, PsbF, PsbH, PsbI, PsbJ, PsbK, PsbL, PsbM, PsbT, PsbY, PsbZ, Psb30/Ycf12, at least 3 peripheral proteins of the oxygen-evolving complex and a large number of cofactors. It forms dimeric complexes.

It is found in the plastid. The protein localises to the chloroplast thylakoid membrane. Functionally, may control the interaction of photosystem II (PSII) cores with the light-harvesting antenna, regulates electron flow through the 2 photosystem reaction centers. PSII is a light-driven water plastoquinone oxidoreductase, using light energy to abstract electrons from H(2)O, generating a proton gradient subsequently used for ATP formation. This is Photosystem II reaction center protein Z from Stigeoclonium helveticum (Green alga).